Consider the following 111-residue polypeptide: Large ribosomal subunit protein uL22 (111 aa).

It belongs to the universal ribosomal protein uL22 family. Part of the 50S ribosomal subunit.

This protein binds specifically to 23S rRNA; its binding is stimulated by other ribosomal proteins, e.g. L4, L17, and L20. It is important during the early stages of 50S assembly. It makes multiple contacts with different domains of the 23S rRNA in the assembled 50S subunit and ribosome. Its function is as follows. The globular domain of the protein is located near the polypeptide exit tunnel on the outside of the subunit, while an extended beta-hairpin is found that lines the wall of the exit tunnel in the center of the 70S ribosome. This chain is Large ribosomal subunit protein uL22, found in Acholeplasma laidlawii.